Reading from the N-terminus, the 37-residue chain is Protamine Z3 (37 aa).

The segment at Ala1 to Arg37 is disordered.

As to expression, testis.

It localises to the nucleus. The protein localises to the chromosome. Protamines substitute for histones in the chromatin of sperm during the haploid phase of spermatogenesis. They compact sperm DNA into a highly condensed, stable and inactive complex. The chain is Protamine Z3 from Scyliorhinus canicula (Small-spotted catshark).